We begin with the raw amino-acid sequence, 183 residues long: Der GTPase-activating protein YihI (183 aa).

The interval 1–101 (MSRSKKTRKG…KLTDEQKLLK (101 aa)) is disordered. 2 stretches are compositionally biased toward basic and acidic residues: residues 22 to 46 (KKQDRAEVTGKRAEKGNKSGSRHNE) and 92 to 101 (KLTDEQKLLK).

This sequence belongs to the YihI family. Interacts with Der.

In terms of biological role, a GTPase-activating protein (GAP) that modifies Der/EngA GTPase function. May play a role in ribosome biogenesis. This chain is Der GTPase-activating protein YihI, found in Shewanella oneidensis (strain ATCC 700550 / JCM 31522 / CIP 106686 / LMG 19005 / NCIMB 14063 / MR-1).